The sequence spans 288 residues: Inorganic pyrophosphatase (288 aa).

Residue R80 coordinates diphosphate. Positions 117, 122, and 154 each coordinate Mg(2+). Residues 252–271 are disordered; it reads TPSYSDAAAQEIPSASPAPA. Residues 258-271 show a composition bias toward low complexity; that stretch reads AAAQEIPSASPAPA.

It belongs to the PPase family. Mg(2+) is required as a cofactor.

The protein localises to the cytoplasm. It carries out the reaction diphosphate + H2O = 2 phosphate + H(+). This chain is Inorganic pyrophosphatase (IPP1), found in Candida albicans (strain SC5314 / ATCC MYA-2876) (Yeast).